A 257-amino-acid polypeptide reads, in one-letter code: Isoprenyl transferase (257 aa).

Residue D37 is part of the active site. D37 provides a ligand contact to Mg(2+). Substrate contacts are provided by residues 38-41 (GNGR), W42, R50, H54, and 82-84 (STE). The active-site Proton acceptor is the N85. Residues W86, R88, R205, and 211–213 (RLS) contribute to the substrate site. A Mg(2+)-binding site is contributed by E224.

The protein belongs to the UPP synthase family. As to quaternary structure, homodimer. Mg(2+) serves as cofactor.

Catalyzes the condensation of isopentenyl diphosphate (IPP) with allylic pyrophosphates generating different type of terpenoids. This Shouchella clausii (strain KSM-K16) (Alkalihalobacillus clausii) protein is Isoprenyl transferase.